A 475-amino-acid polypeptide reads, in one-letter code: ATP synthase subunit beta, chloroplastic (475 aa).

156–163 (GGAGVGKT) is an ATP binding site.

The protein belongs to the ATPase alpha/beta chains family. As to quaternary structure, F-type ATPases have 2 components, CF(1) - the catalytic core - and CF(0) - the membrane proton channel. CF(1) has five subunits: alpha(3), beta(3), gamma(1), delta(1), epsilon(1). CF(0) has four main subunits: a(1), b(1), b'(1) and c(9-12).

Its subcellular location is the plastid. It localises to the chloroplast thylakoid membrane. It catalyses the reaction ATP + H2O + 4 H(+)(in) = ADP + phosphate + 5 H(+)(out). Its function is as follows. Produces ATP from ADP in the presence of a proton gradient across the membrane. The catalytic sites are hosted primarily by the beta subunits. This Trieres chinensis (Marine centric diatom) protein is ATP synthase subunit beta, chloroplastic.